We begin with the raw amino-acid sequence, 292 residues long: MHKLIEKANTLMEALPYIRRFSGKTIVIKYGGHAMADEALKKSFAMDVILLKYIGINPVIVHGGGPQINETLKRYGIVSEFVKGMRVTDAATMGVVEMVLTGQVNKEVVGYINQHGGRAVGLSGKDGGLLLCRKLLQEVKKDDGTIEKVDIGFVGDITDVDSTILVTLEAGGFIPVIAPVGVGAGGESYNINADLVAGKVAAALKAEKLILLTDVPGVKDQEGHLLSSIALADVPALIDNGTITGGMIPKVTCCTDALTGGVHKAHIVDGRVEHAILLEIFTNVGIGTEILG.

Residues 64-65 (GG), arginine 86, and asparagine 190 contribute to the substrate site.

The protein belongs to the acetylglutamate kinase family. ArgB subfamily.

The protein resides in the cytoplasm. The catalysed reaction is N-acetyl-L-glutamate + ATP = N-acetyl-L-glutamyl 5-phosphate + ADP. Its pathway is amino-acid biosynthesis; L-arginine biosynthesis; N(2)-acetyl-L-ornithine from L-glutamate: step 2/4. Functionally, catalyzes the ATP-dependent phosphorylation of N-acetyl-L-glutamate. The protein is Acetylglutamate kinase of Geotalea uraniireducens (strain Rf4) (Geobacter uraniireducens).